The following is a 353-amino-acid chain: Photosystem II D2 protein (353 aa).

Thr2 is modified (N-acetylthreonine). Thr2 is modified (phosphothreonine). Residues 41-61 form a helical membrane-spanning segment; the sequence is CAYFALGGWFTGTTFVTSWYT. His118 contributes to the chlorophyll a binding site. Residues 125-141 form a helical membrane-spanning segment; that stretch reads GFMLRQFELARSVQLRP. The pheophytin a site is built by Gln130 and Asn143. A helical transmembrane segment spans residues 153–166; sequence VFVSVFLIYPLGQS. His198 lines the chlorophyll a pocket. Residues 208-228 form a helical membrane-spanning segment; sequence AALLCAIHGATVENTLFEDGD. Residues His215 and Phe262 each coordinate a plastoquinone. His215 contacts Fe cation. His269 is a binding site for Fe cation. Residues 279–295 traverse the membrane as a helical segment; that stretch reads GLWMSAIGVVGLALNLR.

The protein belongs to the reaction center PufL/M/PsbA/D family. In terms of assembly, PSII is composed of 1 copy each of membrane proteins PsbA, PsbB, PsbC, PsbD, PsbE, PsbF, PsbH, PsbI, PsbJ, PsbK, PsbL, PsbM, PsbT, PsbX, PsbY, PsbZ, Psb30/Ycf12, at least 3 peripheral proteins of the oxygen-evolving complex and a large number of cofactors. It forms dimeric complexes. It depends on The D1/D2 heterodimer binds P680, chlorophylls that are the primary electron donor of PSII, and subsequent electron acceptors. It shares a non-heme iron and each subunit binds pheophytin, quinone, additional chlorophylls, carotenoids and lipids. There is also a Cl(-1) ion associated with D1 and D2, which is required for oxygen evolution. The PSII complex binds additional chlorophylls, carotenoids and specific lipids. as a cofactor.

The protein localises to the plastid. The protein resides in the chloroplast thylakoid membrane. It catalyses the reaction 2 a plastoquinone + 4 hnu + 2 H2O = 2 a plastoquinol + O2. Photosystem II (PSII) is a light-driven water:plastoquinone oxidoreductase that uses light energy to abstract electrons from H(2)O, generating O(2) and a proton gradient subsequently used for ATP formation. It consists of a core antenna complex that captures photons, and an electron transfer chain that converts photonic excitation into a charge separation. The D1/D2 (PsbA/PsbD) reaction center heterodimer binds P680, the primary electron donor of PSII as well as several subsequent electron acceptors. D2 is needed for assembly of a stable PSII complex. The chain is Photosystem II D2 protein from Welwitschia mirabilis (Tree tumbo).